The chain runs to 437 residues: GTPase Der (437 aa).

2 consecutive EngA-type G domains span residues 3 to 167 (NLVA…NKET) and 176 to 352 (PRFA…ENRT). Residues 9–16 (GRPNVGKS), 56–60 (DTGGW), 119–122 (NKTD), 182–189 (GRPNAGKS), 229–233 (DTAGI), and 294–297 (NKWD) contribute to the GTP site. The 85-residue stretch at 353–437 (TKIPTARLNE…TPINIYIRQK (85 aa)) folds into the KH-like domain.

Belongs to the TRAFAC class TrmE-Era-EngA-EngB-Septin-like GTPase superfamily. EngA (Der) GTPase family. In terms of assembly, associates with the 50S ribosomal subunit.

Functionally, GTPase that plays an essential role in the late steps of ribosome biogenesis. This chain is GTPase Der, found in Bacteroides thetaiotaomicron (strain ATCC 29148 / DSM 2079 / JCM 5827 / CCUG 10774 / NCTC 10582 / VPI-5482 / E50).